We begin with the raw amino-acid sequence, 214 residues long: Protein OPG176 (214 aa).

This sequence belongs to the orthopoxvirus OPG176 family. As to quaternary structure, tetramer. Interacts with host MYD88, TRF4, TICAM2 and MAL.

Functionally, BCL2-like protein which disrupts the host immune response by inhibiting the TLR4 signaling pathway leading to NF-kappa-B activation. Acts close to the plasma membrane and targets several host TIR-domain containing adapter proteins including MYD88, TIRAP, TRIF and TICAM2. In turn, blocks the host NF-kappa-B and TRIF-mediated IRF3 activation. This chain is Protein OPG176 (OPG176), found in Homo sapiens (Human).